The chain runs to 289 residues: Glucanase inhibitor protein 2 (289 aa).

The first 19 residues, 1–19, serve as a signal peptide directing secretion; sequence MKVTATIAAASMAIAAASA. The Peptidase S1 domain maps to 29–257; the sequence is ILGGSIIPSG…ALKWVNPIIK (229 aa). Residues Cys-56 and Cys-72 are joined by a disulfide bond. Asn-89, Asn-104, and Asn-109 each carry an N-linked (GlcNAc...) asparagine glycan. 2 cysteine pairs are disulfide-bonded: Cys-180–Cys-192 and Cys-202–Cys-233.

Belongs to the peptidase S1 family.

Its subcellular location is the secreted. Its function is as follows. Secreted effector that suppresses host plant glucan elicitor-mediated defense responses. Targets host endoglucanases and inhibits the endoglucanase-mediated release of elicitor-active glucan oligosaccharides from P.sojae cell walls. In Phytophthora sojae (Soybean stem and root rot agent), this protein is Glucanase inhibitor protein 2.